Consider the following 334-residue polypeptide: Protein SCO1 homolog 1, mitochondrial (334 aa).

Residues 1 to 13 (MASALCRTASRLR) constitute a mitochondrion transit peptide. A disordered region spans residues 74-120 (SASDTTSKHDSGKPETKSSEKNEKSGGSESSDGGSDHKNERASGKDV). 2 stretches are compositionally biased toward basic and acidic residues: residues 79–99 (TSKH…EKSG) and 107–120 (GSDH…GKDV). Residues 125 to 144 (VSWMSFFLLFATGAGLVYYY) traverse the membrane as a helical segment. A Thioredoxin domain is found at 166–331 (PSAGKAAIGG…TDGVVKEIRQ (166 aa)). Cys206, Cys210, and His295 together coordinate Cu cation.

The protein belongs to the SCO1/2 family. In terms of tissue distribution, expressed in the whole plant with highest expression in imbibed seeds, embryos, endosperm, and root tips.

Its subcellular location is the mitochondrion inner membrane. In terms of biological role, thought to play a role in cellular copper homeostasis, mitochondrial redox signaling or insertion of copper into the active site of COX. Plays an essential role in embryo development. This chain is Protein SCO1 homolog 1, mitochondrial (HCC1), found in Arabidopsis thaliana (Mouse-ear cress).